We begin with the raw amino-acid sequence, 314 residues long: tRNA dimethylallyltransferase (314 aa).

13 to 20 (GPTAVGKT) lines the ATP pocket. A substrate-binding site is contributed by 15-20 (TAVGKT). Positions 38–41 (DSMQ) are interaction with substrate tRNA.

This sequence belongs to the IPP transferase family. Monomer. Mg(2+) is required as a cofactor.

The catalysed reaction is adenosine(37) in tRNA + dimethylallyl diphosphate = N(6)-dimethylallyladenosine(37) in tRNA + diphosphate. Catalyzes the transfer of a dimethylallyl group onto the adenine at position 37 in tRNAs that read codons beginning with uridine, leading to the formation of N6-(dimethylallyl)adenosine (i(6)A). The sequence is that of tRNA dimethylallyltransferase from Bacillus subtilis (strain 168).